A 462-amino-acid chain; its full sequence is Alanine racemase (462 aa).

Lysine 34 acts as the Proton acceptor; specific for D-alanine in catalysis. An N6-(pyridoxal phosphate)lysine modification is found at lysine 34. Residues 73–132 (ASWHESVFRHCEKNYTVIRRSNPVKNSVSQNFFNYFSGLQQCFAPRNDGSSIHATTPKAL) form a unknown insert region. A substrate-binding site is contributed by arginine 193. One can recognise an RPE1 insert domain in the interval 286–332 (DLSNNLSYKEEFEGDTERRTAAYINVREDSSTGSTYKLPLEGGYSRG). The Proton acceptor; specific for L-alanine role is filled by tyrosine 357. Methionine 405 contacts substrate.

This sequence belongs to the alanine racemase family. The cofactor is pyridoxal 5'-phosphate.

The catalysed reaction is L-alanine = D-alanine. Its pathway is amino-acid biosynthesis; D-alanine biosynthesis; D-alanine from L-alanine: step 1/1. Its function is as follows. Catalyzes the interconversion of L-alanine and D-alanine. May also act on other amino acids. This chain is Alanine racemase (alr), found in Rickettsia felis (strain ATCC VR-1525 / URRWXCal2) (Rickettsia azadi).